The chain runs to 143 residues: Glutamate-rich protein 4 (143 aa).

The span at leucine 90–glycine 106 shows a compositional bias: acidic residues. The tract at residues leucine 90–isoleucine 143 is disordered. Residues glutamate 107 to lysine 116 show a composition bias toward basic and acidic residues.

The protein is Glutamate-rich protein 4 (Erich4) of Rattus norvegicus (Rat).